The following is a 197-amino-acid chain: Probable chorismate pyruvate-lyase 2 (197 aa).

The segment covering 1 to 14 (MRFDAADAHWRETP) has biased composition (basic and acidic residues). The interval 1–23 (MRFDAADAHWRETPRPGASSAQK) is disordered. The substrate site is built by arginine 73, leucine 111, and glutamate 173.

The protein belongs to the UbiC family.

The protein localises to the cytoplasm. It catalyses the reaction chorismate = 4-hydroxybenzoate + pyruvate. It functions in the pathway cofactor biosynthesis; ubiquinone biosynthesis. Removes the pyruvyl group from chorismate, with concomitant aromatization of the ring, to provide 4-hydroxybenzoate (4HB) for the ubiquinone pathway. This is Probable chorismate pyruvate-lyase 2 from Burkholderia pseudomallei (strain 1710b).